We begin with the raw amino-acid sequence, 93 residues long: Neutrophil cationic peptide 1 type B (93 aa).

The signal sequence occupies residues 1-19 (MRTVPLFAACLLLTLMAQA). Residues 20 to 62 (EPLPRAADHSDTKMKGDREDHVAVISFWEEESTSLQDAGAGAG) constitute a propeptide that is removed on maturation. 3 cysteine pairs are disulfide-bonded: Cys65/Cys93, Cys67/Cys82, and Cys72/Cys92.

Belongs to the alpha-defensin family. Bone marrow.

It is found in the secreted. In terms of biological role, has antibiotic, anti-fungi and antiviral activity. In Cavia porcellus (Guinea pig), this protein is Neutrophil cationic peptide 1 type B.